The sequence spans 402 residues: 1-deoxy-D-xylulose 5-phosphate reductoisomerase (402 aa).

Residues threonine 10, glycine 11, serine 12, isoleucine 13, glycine 36, arginine 37, asparagine 38, and asparagine 124 each contribute to the NADPH site. Lysine 125 provides a ligand contact to 1-deoxy-D-xylulose 5-phosphate. Position 126 (glutamate 126) interacts with NADPH. Aspartate 150 provides a ligand contact to Mn(2+). Residues serine 151, glutamate 152, serine 186, and histidine 209 each coordinate 1-deoxy-D-xylulose 5-phosphate. Glutamate 152 lines the Mn(2+) pocket. Glycine 215 provides a ligand contact to NADPH. 4 residues coordinate 1-deoxy-D-xylulose 5-phosphate: serine 222, asparagine 227, lysine 228, and glutamate 231. Residue glutamate 231 participates in Mn(2+) binding.

It belongs to the DXR family. It depends on Mg(2+) as a cofactor. Requires Mn(2+) as cofactor.

It carries out the reaction 2-C-methyl-D-erythritol 4-phosphate + NADP(+) = 1-deoxy-D-xylulose 5-phosphate + NADPH + H(+). It functions in the pathway isoprenoid biosynthesis; isopentenyl diphosphate biosynthesis via DXP pathway; isopentenyl diphosphate from 1-deoxy-D-xylulose 5-phosphate: step 1/6. With respect to regulation, inhibited by fosmidomycin. Functionally, catalyzes the NADPH-dependent rearrangement and reduction of 1-deoxy-D-xylulose-5-phosphate (DXP) to 2-C-methyl-D-erythritol 4-phosphate (MEP). This Synechococcus sp. (strain ATCC 27144 / PCC 6301 / SAUG 1402/1) (Anacystis nidulans) protein is 1-deoxy-D-xylulose 5-phosphate reductoisomerase.